We begin with the raw amino-acid sequence, 757 residues long: Two pore calcium channel protein 1 (757 aa).

Over 1–94 the chain is Cytoplasmic; sequence MRERGEMREA…NDTRFERAMR (94 aa). Residues 24–48 are disordered; it reads HSHGSGSSGTGSHTSGGGGGWRGSR. Over residues 29-45 the composition is skewed to gly residues; the sequence is GSSGTGSHTSGGGGGWR. Residues 95-115 form a helical membrane-spanning segment; it reads FYFVYLRLDWLWSLNLFALIL. Over 116 to 152 the chain is Extracellular; sequence LNFLEKPLWCRGYSQHACDQRDLYFLGQLPYLSKTES. The helical transmembrane segment at 153-173 threads the bilayer; that stretch reads LIYEGLTLVILVMDIFYPLSY. Residues 174 to 188 are Cytoplasmic-facing; that stretch reads EGLNLFWKNTINKLK. Residues 189 to 209 form a helical membrane-spanning segment; it reads VLLLFILACDILVFAFSPQPF. Arg210 is a topological domain (extracellular). The chain crosses the membrane as a helical; Voltage-sensor span at residues 211-228; the sequence is VAPYIRVAFLIMNIRELR. Residues 229–233 lie on the Cytoplasmic side of the membrane; sequence MCAVT. A helical membrane pass occupies residues 234–254; the sequence is LVGMVGTYLNVLALSLLFLLF. Over 255–270 the chain is Extracellular; sequence ASWLAYVTFEDTPQGK. Residues 271-285 constitute an intramembrane region (pore-forming); sequence TVFSSYGTTLYQMFI. Over 286–308 the chain is Extracellular; that stretch reads LFTTSNNPDVWVPAYKSSRWSSL. Residues 309 to 329 form a helical membrane-spanning segment; the sequence is FFIVYVLLGVYFLTNLILAVI. Over 330-453 the chain is Cytoplasmic; sequence YDSFKEQLAK…LCEWLKSFVR (124 aa). EF-hand domains follow at residues 347–382 and 388–423; these read TRKSILEKAFGIIDATGQGYLNKEQCLSLLDELNKY and TSREDFELIFAELDQSGDFKVTSEEFATLCNTIAIK. Residues 454–474 traverse the membrane as a helical segment; the sequence is SPLFEYIVIFVLLMNLVAVII. Residues 475 to 493 lie on the Extracellular side of the membrane; that stretch reads ETTLDIENSSSQKVWQEVE. Asn482 carries N-linked (GlcNAc...) asparagine glycosylation. Residues 494–514 form a helical membrane-spanning segment; sequence FVFGWIYVIEMALKIFSLGFG. Residues 515 to 523 lie on the Cytoplasmic side of the membrane; sequence AYWMEGQNK. Residues 524–544 form a helical membrane-spanning segment; it reads FDFVLTWTIFIGETLTFAFPS. At 545 to 553 the chain is on the extracellular side; sequence KLSFLSNGE. The chain crosses the membrane as a helical; Voltage-sensor span at residues 554–571; that stretch reads WIRYLLLGRMLRLTRILL. Over 572–595 the chain is Cytoplasmic; it reads QVRRFRAFVATFFTLMSSLMPYLG. Residues 596–616 traverse the membrane as a helical segment; sequence IVFCTLCIYCSLGLQIFGGIV. Residues 617 to 640 lie on the Extracellular side of the membrane; that stretch reads YAGNPTLEETDLFSNDYLLFNFND. The pore-forming intramembrane region spans 641 to 655; sequence YPSGMVTLFNLLVMG. Residues 656–676 lie on the Extracellular side of the membrane; that stretch reads NWQAWMESYRQLTGSYWSLIY. A helical transmembrane segment spans residues 677 to 697; it reads FVSFYLISVLLLLNLIVAFVL. The Cytoplasmic portion of the chain corresponds to 698-757; it reads EAFFAEMELEKDGEADIQDPTLEGRNRRRSVRVRTKGTMVDILLHHMLSNELDGSQNRDQ.

The protein belongs to the calcium channel alpha-1 subunit (TC 1.A.1.11) family. Two pore calcium channel subfamily. As to quaternary structure, homodimer. Expressed in shoot, mature leaf, cultured cells, and at lower level in roots.

The protein localises to the membrane. With respect to regulation, inhibited by the VDCC blocker verapamil in yeast cells. Channel activity may be down-regulated by cytosolic Ca(2+) in rice cells. Inhibited by Al(3+). May function as one of the major voltage-gated Ca(2+) channel (VDCC) across the plasma membrane. May be involved in the regulation of cytosolic Ca(2+) and in growth and development. Acts as the major ROS-responsive Ca(2+) channel and is the possible target of Al-dependent inhibition. Determines sensitivity to T.viride xylanase elicitor. Plays a regulatory role in elicitor-induced defense responses and hypersensitive cell death. This Oryza sativa subsp. japonica (Rice) protein is Two pore calcium channel protein 1 (TPC1).